The following is a 306-amino-acid chain: Mediator of RNA polymerase II transcription subunit 30 (306 aa).

Disordered stretches follow at residues 1–22 (MSGQYPSGYQSPSGHRGNFNSP) and 51–148 (QQQM…STQA). Over residues 51-128 (QQQMQSGGVQ…VSSAAQSATG (78 aa)) the composition is skewed to low complexity.

This sequence belongs to the Mediator complex subunit 30 family. As to quaternary structure, component of the Mediator complex.

It localises to the nucleus. Functionally, component of the Mediator complex, a coactivator involved in the regulated transcription of nearly all RNA polymerase II-dependent genes. Mediator functions as a bridge to convey information from gene-specific regulatory proteins to the basal RNA polymerase II transcription machinery. Mediator is recruited to promoters by direct interactions with regulatory proteins and serves as a scaffold for the assembly of a functional preinitiation complex with RNA polymerase II and the general transcription factors. This Aedes aegypti (Yellowfever mosquito) protein is Mediator of RNA polymerase II transcription subunit 30 (MED30).